The sequence spans 581 residues: Dehydrocurvularin exporter (581 aa).

Residues Met1–Asn10 show a composition bias toward polar residues. Residues Met1–Gly47 are disordered. Asn11 is a glycosylation site (N-linked (GlcNAc...) asparagine). Basic and acidic residues predominate over residues Ser24–Asp39. Helical transmembrane passes span Leu61–Ala81, Asp96–Gly116, Trp126–Pro146, Gly159–Pro179, Leu184–Gly204, Trp215–Leu235, Ile251–Thr271, Val288–Leu308, Ile330–Phe350, Val363–Ile383, Tyr392–Val412, Val424–Phe444, Ile456–Phe476, and Val527–Phe547. The disordered stretch occupies residues Asp552–Val581. A compositionally biased stretch (basic and acidic residues) spans Asp565 to Val581.

The protein belongs to the major facilitator superfamily. TCR/Tet family.

Its subcellular location is the cell membrane. In terms of biological role, efflux pump that is probably involved in the export of dehydrocurvularin. The sequence is that of Dehydrocurvularin exporter from Alternaria cinerariae.